We begin with the raw amino-acid sequence, 1380 residues long: Mitogen-activated protein kinase kinase kinase 5 (1380 aa).

Residues 30 to 97 (CRRGGGAATA…GNSGSGGGRR (68 aa)) are disordered. Positions 37–49 (ATAAEGEPSLQPL) are enriched in low complexity. Positions 50-59 (LVPPPPPPPG) are enriched in pro residues. Arg-85 and Arg-87 each carry asymmetric dimethylarginine. Position 90 is a phosphoserine; by PIM1 and PKB/AKT1 (Ser-90). Residues 649 to 1374 (HCKRFFEMVN…MLCTLWKAII (726 aa)) form an interaction with PPIA/CYPA region. One can recognise a Protein kinase domain in the interval 687 to 945 (NGDRVVLGKG…ANDLLIDEFL (259 aa)). Residues 693-701 (LGKGTYGIV) and Lys-716 each bind ATP. A Phosphotyrosine modification is found at Tyr-725. Catalysis depends on Asp-810, which acts as the Proton acceptor. Thr-820 carries the phosphothreonine; by autocatalysis modification. Thr-845 carries the post-translational modification Phosphothreonine; by autocatalysis, MELK and MAP3K6. Thr-849 carries the phosphothreonine; by autocatalysis modification. Residue Ser-965 is modified to Phosphoserine. Phosphoserine; by autocatalysis is present on Ser-973. Phosphoserine is present on residues Ser-1036 and Ser-1040. The disordered stretch occupies residues 1188 to 1215 (ASESDTADPEDLDVEDEHEELSSNQTVR). A compositionally biased stretch (acidic residues) spans 1192–1206 (DTADPEDLDVEDEHE). Residues 1252–1292 (LGRMKIETNRLLEELVRKERELQALLHQAIEEKDQEIRHLK) adopt a coiled-coil conformation.

The protein belongs to the protein kinase superfamily. STE Ser/Thr protein kinase family. MAP kinase kinase kinase subfamily. In terms of assembly, homodimer when inactive. Binds both upstream activators and downstream substrates in multimolecular complexes. Part of a cytoplasmic complex made of HIPK1, DAB2IP and MAP3K5 in response to TNF. This complex formation promotes MAP3K5-JNK activation and subsequent apoptosis. Interacts with SOCS1 which recognizes phosphorylation of Tyr-725 and induces MAP3K5/ASK1 degradation in endothelial cells. Interacts with the 14-3-3 family proteins such as YWHAB, YWHAE, YWHAQ, YWHAH, YWHAZ and SFN. Interacts with ARRB2, BIRC2, DAB2IP, IGF1R, MAP3K6/ASK2, PIM1, PGAM5, SOCS1, STUB1, TRAF2 and TXN. Interacts with ERN1 in a TRAF2-dependent manner. Interacts with calcineurin subunit PPP3R1, PPP5C, PPM1L and TRAF6. Interacts (via N-terminus) with RAF1 and this interaction inhibits the proapoptotic function of MAP3K5. Interacts with DAB2IP (via N-terminus C2 domain); the interaction occurs in a TNF-alpha-dependent manner. Interacts with DUSP13A; may positively regulate apoptosis. Interacts with PPIA/CYPA. Interacts with PRMT1; the interaction results in MAP3K5 methylation by PRMT1 which inhibits MAP3K5 activation. Interacts with TRAF2; the interaction is inhibited by PRMT1. Interacts with TRIM48. Requires Mg(2+) as cofactor. In terms of processing, ser-90 and Ser-1040 are inactivating phosphorylation sites, the former of which is phosphorylated by AKT1. Phosphorylated at Ser-973 which induces association of MAP3K5/ASK1 with the 14-3-3 family proteins and suppresses MAP3K5/ASK1 activity. Calcineurin (CN) dephosphorylates this site. Also dephosphorylated and activated by PGAM5. Phosphorylated at Thr-845 through autophosphorylation and by MAP3K6/ASK2 which leads to activation. Thr-845 is dephosphorylated by PPP5C. Phosphorylation at Ser-973 in response to oxidative stress is negatively regulated by PPIA/CYPA. Ubiquitinated. Tumor necrosis factor (TNF) induces TNFR2-dependent ubiquitination, leading to proteasomal degradation. Ubiquitinated by RC3H2 in a TRIM48-dependent manner. Post-translationally, methylation at Arg-85 and Arg-87 by PRMT1 promotes association of MAP3K5 with thioredoxin and negatively regulates MAP3K5 association with TRAF2, inhibiting MAP3K5 activation. Methylation is blocked by ubiquitination of PRMT1 by TRIM48. In terms of tissue distribution, expressed in various adult mouse tissues including heart, brain, lung, liver and kidney.

The protein resides in the cytoplasm. The protein localises to the endoplasmic reticulum. It carries out the reaction L-seryl-[protein] + ATP = O-phospho-L-seryl-[protein] + ADP + H(+). It catalyses the reaction L-threonyl-[protein] + ATP = O-phospho-L-threonyl-[protein] + ADP + H(+). Activated by various stressors, including oxidative stress, endoplasmic reticulum stress, and calcium overload, as well as by receptor-mediated inflammatory signals, such as the tumor necrosis factor (TNF) and lipopolysaccharide (LPS). Homophilic association of MAP3K5/ASK1 through the C-terminal coiled-coil domains and the heteromeric complex formation of MAP3K5/ASK1 with the reduced form of thioredoxin (TXN), constitutes an inactive form of the kinase. Upon ROS-induced dissociation of TXN from MAP3K5/ASK1, TRAF2 and TRAF6 are reciprocally recruited to MAP3K5/ASK1 and form the active MAP3K5/ASK1 signalosome, in which TRAF2 and TRAF6 appear to facilitate the active configuration of MAP3K5/ASK1. MAP3K5/ASK1 activity is also regulated through several phosphorylation and dephosphorylation events. Thr-845 is an activating phosphorylation site that is autophosphorylated and phosphorylated by MAP3K6/ASK2 and dephosphorylated by PPP5C. Ser-90 and Ser-1040 are inactivating phosphorylation sites, the former of which is phosphorylated by AKT1. Phosphorylation of Ser-973 induces association of MAP3K5/ASK1 with the 14-3-3 family proteins, which suppresses MAP3K5/ASK1 activity. Calcium/calmodulin-activated protein phosphatase calcineurin (PPP3CA) has been shown to directly dephosphorylate this site. SOCS1 binds to ASK1 by recognizing phosphorylation of Tyr-725 and induces MAP3K5/ASK1 degradation in endothelial cells. Also dephosphorylated and activated by PGAM5. Contains an N-terminal autoinhibitory domain. Its function is as follows. Serine/threonine kinase which acts as an essential component of the MAP kinase signal transduction pathway. Plays an important role in the cascades of cellular responses evoked by changes in the environment. Mediates signaling for determination of cell fate such as differentiation and survival. Plays a crucial role in the apoptosis signal transduction pathway through mitochondria-dependent caspase activation. MAP3K5/ASK1 is required for the innate immune response, which is essential for host defense against a wide range of pathogens. Mediates signal transduction of various stressors like oxidative stress as well as by receptor-mediated inflammatory signals, such as the tumor necrosis factor (TNF) or lipopolysaccharide (LPS). Once activated, acts as an upstream activator of the MKK/JNK signal transduction cascade and the p38 MAPK signal transduction cascade through the phosphorylation and activation of several MAP kinase kinases like MAP2K4/SEK1, MAP2K3/MKK3, MAP2K6/MKK6 and MAP2K7/MKK7. These MAP2Ks in turn activate p38 MAPKs and c-jun N-terminal kinases (JNKs). Both p38 MAPK and JNKs control the transcription factors activator protein-1 (AP-1). This chain is Mitogen-activated protein kinase kinase kinase 5 (Map3k5), found in Mus musculus (Mouse).